A 298-amino-acid chain; its full sequence is tRNA pseudouridine synthase B (298 aa).

Asp-42 serves as the catalytic Nucleophile.

It belongs to the pseudouridine synthase TruB family. Type 1 subfamily.

It carries out the reaction uridine(55) in tRNA = pseudouridine(55) in tRNA. Functionally, responsible for synthesis of pseudouridine from uracil-55 in the psi GC loop of transfer RNAs. In Mycobacterium tuberculosis (strain CDC 1551 / Oshkosh), this protein is tRNA pseudouridine synthase B.